The primary structure comprises 129 residues: Large ribosomal subunit protein bL12 (129 aa).

It belongs to the bacterial ribosomal protein bL12 family. Homodimer. Part of the ribosomal stalk of the 50S ribosomal subunit. Forms a multimeric L10(L12)X complex, where L10 forms an elongated spine to which 2 to 4 L12 dimers bind in a sequential fashion. Binds GTP-bound translation factors.

In terms of biological role, forms part of the ribosomal stalk which helps the ribosome interact with GTP-bound translation factors. Is thus essential for accurate translation. This is Large ribosomal subunit protein bL12 from Thermosipho melanesiensis (strain DSM 12029 / CIP 104789 / BI429).